A 428-amino-acid polypeptide reads, in one-letter code: uncharacterized protein (428 aa).

In terms of domain architecture, Glutaredoxin spans 241–351 (KEEEEQSVGK…KLLGGCERVE (111 aa)). The segment covering 386–401 (EDDDDDDDEGDDDESV) has biased composition (acidic residues). Residues 386 to 405 (EDDDDDDDEGDDDESVKEER) form a disordered region.

This is an uncharacterized protein from Arabidopsis thaliana (Mouse-ear cress).